A 941-amino-acid polypeptide reads, in one-letter code: Probable respiratory burst oxidase homolog protein I (941 aa).

Residues 1 to 374 (MSMSFSGGTH…LYSLQDNWKR (374 aa)) lie on the Cytoplasmic side of the membrane. Disordered stretches follow at residues 29–48 (PSLP…SGEE) and 103–166 (ERLT…SGTE). Residues 36 to 45 (SPSPSSSSSS) show a composition bias toward low complexity. Over residues 103–117 (ERLTAGTNSKQQIQK) the composition is skewed to polar residues. EF-hand-like regions lie at residues 196-204 (SKDGYLFKS) and 232-243 (RRIMVDKINLQE). Residues 254–289 (ESFDSRLQIFFNMVKNGDGRITENEVKEIIILSASA) enclose the EF-hand domain. Ca(2+)-binding residues include Asn-269, Asp-271, Arg-273, and Glu-278. Phosphoserine is present on residues Ser-346 and Ser-350. A helical membrane pass occupies residues 375 to 395 (IWVLTLWFVIMAWLFMWKCYQ). Residues 396–407 (YKHKDAFHVMGY) are Extracellular-facing. A helical transmembrane segment spans residues 408–428 (CLVMAKGAAETLKFNMALILL). One can recognise a Ferric oxidoreductase domain in the interval 413-570 (KGAAETLKFN…LLLTVYVLLV (158 aa)). Residues 429–514 (PVCRNTITYL…YFGLVNTPVG (86 aa)) lie on the Cytoplasmic side of the membrane. The helical transmembrane segment at 515 to 535 (ITGIIMVAFMLIAFTLASRRC) threads the bilayer. At 536–557 (RRNLTKLPKPFDKLTGYNAFWY) the chain is on the extracellular side. A helical transmembrane segment spans residues 558–578 (SHHLLLTVYVLLVIHGVSLYL). Topologically, residues 579–586 (EHKWYRKT) are cytoplasmic. Residues 587–604 (VWMYLAVPVLLYVGERIF) traverse the membrane as a helical segment. At 605 to 731 (RFFRSRLYTV…PYGAPAQDHW (127 aa)) the chain is on the extracellular side. Residues 609 to 729 (SRLYTVEICK…DGPYGAPAQD (121 aa)) form the FAD-binding FR-type domain. Residues 732–752 (KYDVVLLVGLGIGATPFVSIL) traverse the membrane as a helical segment. Residues 753–941 (RDLLNNIIKQ…TRFDFHKEQF (189 aa)) are Cytoplasmic-facing.

This sequence belongs to the RBOH (TC 5.B.1.3) family. In terms of assembly, monomer and homodimer.

It is found in the membrane. In terms of biological role, calcium-dependent NADPH oxidase that generates superoxide. This is Probable respiratory burst oxidase homolog protein I (RBOHI) from Arabidopsis thaliana (Mouse-ear cress).